The following is a 125-amino-acid chain: Small ribosomal subunit protein uS11 (125 aa).

The protein belongs to the universal ribosomal protein uS11 family. In terms of assembly, part of the 30S ribosomal subunit. Interacts with proteins S7 and S18. Binds to IF-3.

Functionally, located on the platform of the 30S subunit, it bridges several disparate RNA helices of the 16S rRNA. Forms part of the Shine-Dalgarno cleft in the 70S ribosome. This is Small ribosomal subunit protein uS11 from Aquifex aeolicus (strain VF5).